We begin with the raw amino-acid sequence, 73 residues long: Serine rich endogenous peptide 14 (73 aa).

The N-terminal stretch at 1–31 is a signal peptide; it reads MAAKTSNLVALLLSLFLLLLSISSQVGLGEA. Residues 44 to 73 form a disordered region; it reads VSHPSPPPPHRSMAPPIFVPPSTSHKGQGP. An SCOOP motif motif is present at residues 59 to 73; that stretch reads PIFVPPSTSHKGQGP. The span at 64–73 shows a compositional bias: polar residues; the sequence is PSTSHKGQGP. Positions 65–67 match the SxS motif essential for MIK2 binding motif; sequence STS.

The protein belongs to the serine rich endogenous peptide (SCOOP) phytocytokine family. As to quaternary structure, interacts with MIK2 (via extracellular leucine-rich repeat domain); this interaction triggers the formation of complex between MIK2 and the BAK1/SERK3 and SERK4 coreceptors, and subsequent BAK1 activation by phosphorylation. Mostly expressed in seedlings shoots and leaves, and, to a lower extent, in roots, stems, siliques, seeds and flowers.

It is found in the cell membrane. The protein localises to the secreted. It localises to the extracellular space. The protein resides in the apoplast. Functionally, brassicaceae-specific phytocytokine (plant endogenous peptide released into the apoplast) perceived by MIK2 in a BAK1/SERK3 and SERK4 coreceptors-dependent manner, that modulates various physiological and antimicrobial processes including growth prevention and reactive oxygen species (ROS) response regulation. Inhibits root growth and regulates root meristems. Prevents general growth and development. Exhibits antibacterial effects against Pseudomonas syringae pv. tomato DC3000, Ralstonia solanacearum, Bacillus subtilis and Agrobacterium tumefaciens, thus being an antimicrobial peptide (AMP). This is Serine rich endogenous peptide 14 from Arabidopsis thaliana (Mouse-ear cress).